A 196-amino-acid polypeptide reads, in one-letter code: DNA replication complex GINS protein PSF1 (196 aa).

This sequence belongs to the GINS1/PSF1 family. As to quaternary structure, component of the GINS complex which is a heterotetramer of gins1/psf1, gins2/psf2, gins3/psf3 and gins4/sld5. Component of the CMG helicase complex, composed of the mcm2-7 complex, the GINS complex and cdc45.

The protein resides in the nucleus. It localises to the chromosome. Required for correct functioning of the GINS complex, a complex that plays an essential role in the initiation of DNA replication, and progression of DNA replication forks. GINS complex is a core component of CDC45-MCM-GINS (CMG) helicase, the molecular machine that unwinds template DNA during replication, and around which the replisome is built. This is DNA replication complex GINS protein PSF1 from Xenopus laevis (African clawed frog).